The following is a 408-amino-acid chain: PTI1-like tyrosine-protein kinase 3 (408 aa).

Over residues 59–76 (SSENEHLRSPKHHNDFGH) the composition is skewed to basic and acidic residues. The segment at 59–91 (SSENEHLRSPKHHNDFGHHTRKPQAAVKPDALK) is disordered. Residues 113–395 (FGSKSLIGEG…IVVKALQPLL (283 aa)) enclose the Protein kinase domain. ATP is bound by residues 119–127 (IGEGSYGRA) and K141. D245 (proton acceptor) is an active-site residue.

Belongs to the protein kinase superfamily. Tyr protein kinase family. Interacts with OXI1. In terms of processing, phosphorylated by OXI1.

Its subcellular location is the cell membrane. It carries out the reaction L-tyrosyl-[protein] + ATP = O-phospho-L-tyrosyl-[protein] + ADP + H(+). This is PTI1-like tyrosine-protein kinase 3 (PTI13) from Arabidopsis thaliana (Mouse-ear cress).